Here is a 226-residue protein sequence, read N- to C-terminus: Ribonuclease 3 (226 aa).

One can recognise an RNase III domain in the interval 6 to 128; that stretch reads VNQLQKKLGY…LIGAIFLDSD (123 aa). Glu-41 contributes to the Mg(2+) binding site. Residue Asp-45 is part of the active site. Mg(2+)-binding residues include Asp-114 and Glu-117. Glu-117 is an active-site residue. The DRBM domain occupies 155-225; sequence DPKTRLQEYL…AEQALIQLEL (71 aa).

It belongs to the ribonuclease III family. As to quaternary structure, homodimer. Mg(2+) is required as a cofactor.

The protein resides in the cytoplasm. It carries out the reaction Endonucleolytic cleavage to 5'-phosphomonoester.. Its function is as follows. Digests double-stranded RNA. Involved in the processing of primary rRNA transcript to yield the immediate precursors to the large and small rRNAs (23S and 16S). Processes some mRNAs, and tRNAs when they are encoded in the rRNA operon. Processes pre-crRNA and tracrRNA of type II CRISPR loci if present in the organism. This Proteus mirabilis (strain HI4320) protein is Ribonuclease 3.